Reading from the N-terminus, the 655-residue chain is Macrolide export ATP-binding/permease protein MacB (655 aa).

The region spanning 6 to 244 (IVLRGLRREY…VAAPTAAAAQ (239 aa)) is the ABC transporter domain. 42–49 (GASGSGKS) contacts ATP. 4 helical membrane passes run 279 to 299 (FLTM…VAVG), 528 to 548 (LTLM…IGVM), 579 to 599 (FLIE…AVAY), and 618 to 638 (AGSI…FGYL).

Belongs to the ABC transporter superfamily. Macrolide exporter (TC 3.A.1.122) family. Homodimer.

It is found in the cell inner membrane. Its function is as follows. Non-canonical ABC transporter that contains transmembrane domains (TMD), which form a pore in the inner membrane, and an ATP-binding domain (NBD), which is responsible for energy generation. Confers resistance against macrolides. The chain is Macrolide export ATP-binding/permease protein MacB from Rhodopseudomonas palustris (strain BisB18).